The primary structure comprises 448 residues: MSTFIGQLIGFAVIVFLVVKYVVPPVRTLMAKQQDAVRQQLADSKTAADKLVEAEGAHAKAIEDAKADAAQIAEEAKADAVQISKQLREQADAEVERIKVHGQEQIVLQRQQLIRQLRGDLGAESVRRAGDLVRSHVADPSAQSATVDRFLDELSQMAGSVGAAKRPVPGGYSGMHAASRESLAAQVSTFRETAASLDSSALSALAEDIAAVAELLISELVLRKHLSEPVDASENEAKLTLVNSLLGNKIGAPALAIVRSAVTARWSASSDLITSLEYIARLALLERAERDGQIEDVEDQLFRVSRVLDAEPQLATLLSDSTAPAQGRVALLTNVLGGRANEVTTALLAQTVRLLYSVRAEVAVLDVAELAVARRDESVAHVKAAAPITDAQRTRLAQVLGQIYGRTIAVQLDVDPELLGGLVVNIGDEEIDGSLSTRLSAAALHLPN.

Positions Met1 to Val168 are ATP synthase subunit b. Residues Phe4 to Pro24 form a helical membrane-spanning segment. The segment at Pro169–Asn448 is ATP synthase subunit delta.

This sequence in the N-terminal section; belongs to the ATPase B chain family. It in the C-terminal section; belongs to the ATPase delta chain family. In terms of assembly, F-type ATPases have 2 components, F(1) - the catalytic core - and F(0) - the membrane proton channel. F(1) has five subunits: alpha(3), beta(3), gamma(1), delta(1), epsilon(1). F(0) has three main subunits: a(1), b(2) and c(10-14). The alpha and beta chains form an alternating ring which encloses part of the gamma chain. F(1) is attached to F(0) by a central stalk formed by the gamma and epsilon chains, while a peripheral stalk is formed by the delta and b chains.

The protein resides in the cell membrane. F(1)F(0) ATP synthase produces ATP from ADP in the presence of a proton or sodium gradient. F-type ATPases consist of two structural domains, F(1) containing the extramembraneous catalytic core and F(0) containing the membrane proton channel, linked together by a central stalk and a peripheral stalk. During catalysis, ATP synthesis in the catalytic domain of F(1) is coupled via a rotary mechanism of the central stalk subunits to proton translocation. Functionally, this fusion protein includes a component of the F(0) channel (subunit b) and of the F(1) subunit (subunit delta). Two copies of subunit b and one of delta together form the peripheral 'stator' stalk which links F(1) to F(0). This chain is ATP synthase subunit b-delta (atpFH), found in Mycobacteroides abscessus (strain ATCC 19977 / DSM 44196 / CCUG 20993 / CIP 104536 / JCM 13569 / NCTC 13031 / TMC 1543 / L948) (Mycobacterium abscessus).